The following is a 114-amino-acid chain: Large ribosomal subunit protein uL22 (114 aa).

Belongs to the universal ribosomal protein uL22 family. In terms of assembly, part of the 50S ribosomal subunit.

In terms of biological role, this protein binds specifically to 23S rRNA; its binding is stimulated by other ribosomal proteins, e.g. L4, L17, and L20. It is important during the early stages of 50S assembly. It makes multiple contacts with different domains of the 23S rRNA in the assembled 50S subunit and ribosome. Its function is as follows. The globular domain of the protein is located near the polypeptide exit tunnel on the outside of the subunit, while an extended beta-hairpin is found that lines the wall of the exit tunnel in the center of the 70S ribosome. In Aeromonas hydrophila subsp. hydrophila (strain ATCC 7966 / DSM 30187 / BCRC 13018 / CCUG 14551 / JCM 1027 / KCTC 2358 / NCIMB 9240 / NCTC 8049), this protein is Large ribosomal subunit protein uL22.